The primary structure comprises 93 residues: Protein translocase subunit SecE (93 aa).

The segment at 1–33 (MTDALGSIDMPDAEDETREKKARKGGKRGKKGP) is disordered. Residues 20 to 33 (KKARKGGKRGKKGP) are compositionally biased toward basic residues. A helical transmembrane segment spans residues 64–84 (TVVIVFVVIMIGLVTVIDFGF).

Belongs to the SecE/SEC61-gamma family. As to quaternary structure, component of the Sec protein translocase complex. Heterotrimer consisting of SecY, SecE and SecG subunits. The heterotrimers can form oligomers, although 1 heterotrimer is thought to be able to translocate proteins. Interacts with the ribosome. Interacts with SecDF, and other proteins may be involved. Interacts with SecA.

The protein resides in the cell membrane. In terms of biological role, essential subunit of the Sec protein translocation channel SecYEG. Clamps together the 2 halves of SecY. May contact the channel plug during translocation. The polypeptide is Protein translocase subunit SecE (Streptomyces virginiae (Streptomyces cinnamonensis)).